Consider the following 88-residue polypeptide: Apolipoprotein C-I (88 aa).

Positions 1-26 (MRLFLSLPVLVVVLAMVLEGPAPAQA) are cleaved as a signal peptide.

This sequence belongs to the apolipoprotein C1 family.

It is found in the secreted. Inhibitor of lipoprotein binding to the low density lipoprotein (LDL) receptor, LDL receptor-related protein, and very low density lipoprotein (VLDL) receptor. Associates with high density lipoproteins (HDL) and the triacylglycerol-rich lipoproteins in the plasma and makes up about 10% of the protein of the VLDL and 2% of that of HDL. Appears to interfere directly with fatty acid uptake and is also the major plasma inhibitor of cholesteryl ester transfer protein (CETP). Binds free fatty acids and reduces their intracellular esterification. Modulates the interaction of APOE with beta-migrating VLDL and inhibits binding of beta-VLDL to the LDL receptor-related protein. The polypeptide is Apolipoprotein C-I (APOC1) (Ailurus fulgens (Himalayan red panda)).